Consider the following 345-residue polypeptide: Protein GAMETE CELL DEFECTIVE 1, mitochondrial (345 aa).

Residues 1–43 (MLALRKTLLHGRLPAAPPAAAAAAIASRIPALLRRLSSSPGDG) constitute a mitochondrion transit peptide. Residues 36–82 (LSSSPGDGQGGDEWGSSWSTGITKEHFDGSDAAVGRPVTSPSKPVSP) form a disordered region.

It is found in the mitochondrion. Its function is as follows. Essential for fertility (male and female gametophyte functions and development). Required for the integrity of female gametic mitochondria. Involved in embryo apical-basal patterning, and particularly dorsal-ventral patterning, during early embryogenesis, and endosperm free nucleus positioning and development as well as early endosperm development, probably by modulating the expression pattern of related genes (e.g. AL1, MYB3/AL2, CYP78A13/GE, PNH1, HAZ1, MPK6 and OSH1). Has function in triggering of endosperm programmed cell death (PCD) leading to syncytial endosperm cellularization and starchy endosperm cell maturation. Implicated in central vacuole dynamics necessary for microspore development leading to pollen production, and for pollen development and germination. This chain is Protein GAMETE CELL DEFECTIVE 1, mitochondrial, found in Oryza sativa subsp. indica (Rice).